The chain runs to 533 residues: Tyrosine/DOPA decarboxylase 3 (533 aa).

At lysine 319 the chain carries N6-(pyridoxal phosphate)lysine.

Belongs to the group II decarboxylase family. As to quaternary structure, homodimer. Pyridoxal 5'-phosphate serves as cofactor. In terms of tissue distribution, roots.

It carries out the reaction L-tyrosine + H(+) = tyramine + CO2. The enzyme catalyses L-dopa + H(+) = dopamine + CO2. The catalysed reaction is 5-hydroxy-L-tryptophan + H(+) = serotonin + CO2. Marginally higher substrate specificity for L-DOPA over L-tyrosine. The polypeptide is Tyrosine/DOPA decarboxylase 3 (TYDC3) (Papaver somniferum (Opium poppy)).